The sequence spans 331 residues: Tetraacyldisaccharide 4'-kinase (331 aa).

Residue 51–58 coordinates ATP; it reads TAGGAGKT.

This sequence belongs to the LpxK family.

It catalyses the reaction a lipid A disaccharide + ATP = a lipid IVA + ADP + H(+). It functions in the pathway glycolipid biosynthesis; lipid IV(A) biosynthesis; lipid IV(A) from (3R)-3-hydroxytetradecanoyl-[acyl-carrier-protein] and UDP-N-acetyl-alpha-D-glucosamine: step 6/6. Transfers the gamma-phosphate of ATP to the 4'-position of a tetraacyldisaccharide 1-phosphate intermediate (termed DS-1-P) to form tetraacyldisaccharide 1,4'-bis-phosphate (lipid IVA). In Rhodospirillum rubrum (strain ATCC 11170 / ATH 1.1.1 / DSM 467 / LMG 4362 / NCIMB 8255 / S1), this protein is Tetraacyldisaccharide 4'-kinase.